Consider the following 445-residue polypeptide: ATP-dependent protease ATPase subunit HslU (445 aa).

Residues isoleucine 17, 59-64, aspartate 254, glutamate 319, and arginine 391 each bind ATP; that span reads GVGKTE.

Belongs to the ClpX chaperone family. HslU subfamily. A double ring-shaped homohexamer of HslV is capped on each side by a ring-shaped HslU homohexamer. The assembly of the HslU/HslV complex is dependent on binding of ATP.

Its subcellular location is the cytoplasm. Its function is as follows. ATPase subunit of a proteasome-like degradation complex; this subunit has chaperone activity. The binding of ATP and its subsequent hydrolysis by HslU are essential for unfolding of protein substrates subsequently hydrolyzed by HslV. HslU recognizes the N-terminal part of its protein substrates and unfolds these before they are guided to HslV for hydrolysis. The sequence is that of ATP-dependent protease ATPase subunit HslU from Pseudomonas fluorescens (strain Pf0-1).